The chain runs to 214 residues: Thymidylate kinase (214 aa).

10-17 (GPDGAGKT) is an ATP binding site.

This sequence belongs to the thymidylate kinase family.

It carries out the reaction dTMP + ATP = dTDP + ADP. In terms of biological role, phosphorylation of dTMP to form dTDP in both de novo and salvage pathways of dTTP synthesis. The chain is Thymidylate kinase from Limosilactobacillus fermentum (strain NBRC 3956 / LMG 18251) (Lactobacillus fermentum).